The chain runs to 423 residues: D-tagatose-1,6-bisphosphate aldolase subunit GatZ (423 aa).

The protein belongs to the GatZ/KbaZ family. GatZ subfamily. In terms of assembly, forms a complex with GatY.

It functions in the pathway carbohydrate metabolism; D-tagatose 6-phosphate degradation; D-glyceraldehyde 3-phosphate and glycerone phosphate from D-tagatose 6-phosphate: step 2/2. In terms of biological role, component of the tagatose-1,6-bisphosphate aldolase GatYZ that is required for full activity and stability of the Y subunit. Could have a chaperone-like function for the proper and stable folding of GatY. When expressed alone, GatZ does not show any aldolase activity. Is involved in the catabolism of galactitol. This is D-tagatose-1,6-bisphosphate aldolase subunit GatZ from Salmonella newport (strain SL254).